The following is a 222-amino-acid chain: Octanoyltransferase (222 aa).

Positions 34–214 constitute a BPL/LPL catalytic domain; it reads AEAPSTVLLL…EFRKHEEALV (181 aa). Substrate-binding positions include 72–79, 144–146, and 157–159; these read RGGKLTWH, AIG, and GIA. C175 acts as the Acyl-thioester intermediate in catalysis.

This sequence belongs to the LipB family.

The protein resides in the cytoplasm. It catalyses the reaction octanoyl-[ACP] + L-lysyl-[protein] = N(6)-octanoyl-L-lysyl-[protein] + holo-[ACP] + H(+). It participates in protein modification; protein lipoylation via endogenous pathway; protein N(6)-(lipoyl)lysine from octanoyl-[acyl-carrier-protein]: step 1/2. Functionally, catalyzes the transfer of endogenously produced octanoic acid from octanoyl-acyl-carrier-protein onto the lipoyl domains of lipoate-dependent enzymes. Lipoyl-ACP can also act as a substrate although octanoyl-ACP is likely to be the physiological substrate. In Arthrobacter sp. (strain FB24), this protein is Octanoyltransferase.